The following is a 512-amino-acid chain: Colistin resistance protein EmrB (512 aa).

14 consecutive transmembrane segments (helical) span residues 17 to 37 (WAIF…IQIV), 55 to 75 (VTWV…MSSI), 84 to 104 (VYYT…ALSW), 115 to 135 (IQGF…YLLF), 144 to 164 (LVMF…IGGW), 169 to 189 (FSWH…ATVI), 205 to 225 (SMDW…EYFL), 234 to 254 (LADT…MIFF), 280 to 300 (ITTF…PVFL), 314 to 334 (VMMV…WLIP), 341 to 361 (TVFV…HLSI), 376 to 396 (GIGL…TLPL), 412 to 432 (IGGA…TAMH), and 486 to 506 (FNDL…LTIF).

This sequence belongs to the major facilitator superfamily. EmrB family.

The protein resides in the cell inner membrane. Its function is as follows. Probably part of an efflux pump system that contributes to adaptation to osmotic stress and resistance to colistin. This chain is Colistin resistance protein EmrB, found in Acinetobacter baumannii (strain ATCC 17978 / DSM 105126 / CIP 53.77 / LMG 1025 / NCDC KC755 / 5377).